We begin with the raw amino-acid sequence, 295 residues long: MKQKFKRAILYARQHRANQEVNESLHRLVDFLSTQDIEIFQDSDTAASFELKTPVLPREKMGEKHDLIIVVGGDGSLLSASRMAIKVNTPVIGINRGRLGFLTDILPQDIESHLGPVLNGQYNEEERFLLHTKIYDKENSYFEGDALNDVVLGRGSETHLIEFDVYINQQLVSHYRSDGMILSTPTGSTAYALSAGGPIMHPQLNAIVLVPMFSHSLSSRPLVIDGEAEIELYISKSNETDLRISCDGHESRVVKPGQKVAVKKNGNRLRLLHPLDYHYYDTLRSKLGWESKHQG.

Aspartate 74 (proton acceptor) is an active-site residue. Residues 74-75 (DG), 148-149 (ND), histidine 159, arginine 176, aspartate 178, and 189-194 (TAYALS) each bind NAD(+).

It belongs to the NAD kinase family. It depends on a divalent metal cation as a cofactor.

It is found in the cytoplasm. The catalysed reaction is NAD(+) + ATP = ADP + NADP(+) + H(+). Its function is as follows. Involved in the regulation of the intracellular balance of NAD and NADP, and is a key enzyme in the biosynthesis of NADP. Catalyzes specifically the phosphorylation on 2'-hydroxyl of the adenosine moiety of NAD to yield NADP. The polypeptide is NAD kinase (Legionella pneumophila (strain Corby)).